We begin with the raw amino-acid sequence, 100 residues long: RING finger protein Z (100 aa).

Residue G2 is the site of N-myristoyl glycine; by host attachment. An RING-type; atypical zinc finger spans residues 43–79 (CRCCWFANTNLIKCSDHYICLKCLNIMLGKSSFCDIC). A PTAP/PSAP motif motif is present at residues 93 to 96 (PSAP).

Belongs to the arenaviridae Z protein family. Interacts with protein NP; this interaction probably directs the encapsidated genome to budding sites. Interacts (via RING domain) with polymerase L; this interaction inhibits viral transcription and replication, Z partially blocks the product exit tunnel for the releasing nascent RNA product. Interacts with the glycoprotein complex; this interaction plays a role in virion budding. Interacts with host eIF4E; this interaction results in eIF4E reduced affinity for its substrate, the 5'-m7 G cap structure. Interacts (via late-budding domain) with host TSG101; this interaction is essential for budding and release of viral particles. Interacts with host RPLP0; this interaction may serve to load ribosome-like particles inside the virion. Interacts with host PML; this interaction induces PML bodies redistribution in the cytoplasm upon viral infection. In terms of processing, myristoylation is required for the role of RING finger protein Z in assembly and budding.

The protein resides in the virion. It is found in the host cytoplasm. The protein localises to the host perinuclear region. It localises to the host cell membrane. In terms of biological role, plays a crucial role in virion assembly and budding. Expressed late in the virus life cycle, it acts as an inhibitor of viral transcription and RNA synthesis by interacting with the viral polymerase L. Presumably recruits the NP encapsidated genome to cellular membranes at budding sites via direct interaction with NP. Plays critical roles in the final steps of viral release by interacting with host TSG101, a member of the vacuolar protein-sorting pathway and using other cellular host proteins involved in vesicle formation pathway. The budding of the virus progeny occurs after association of protein Z with the viral glycoprotein complex SSP-GP1-GP2 at the cell periphery, step that requires myristoylation of protein Z. Also selectively represses protein production by associating with host eIF4E. In cell-based minigenome assay, has an inhibitory effect on the ribonucleoprotein machinery (vRNP), which is responsible for the replication and transcription of the viral genome. This is RING finger protein Z from Homo sapiens (Human).